Here is a 336-residue protein sequence, read N- to C-terminus: Probable tRNA N6-adenosine threonylcarbamoyltransferase (336 aa).

A divalent metal cation is bound by residues H110, H114, and Y131. Substrate contacts are provided by residues 131 to 135 (YVSGG), D163, G178, E182, and N267. D295 lines the a divalent metal cation pocket.

It belongs to the KAE1 / TsaD family. In terms of assembly, component of the EKC/KEOPS complex; the whole complex dimerizes. The cofactor is a divalent metal cation.

It localises to the cytoplasm. Its subcellular location is the nucleus. It catalyses the reaction L-threonylcarbamoyladenylate + adenosine(37) in tRNA = N(6)-L-threonylcarbamoyladenosine(37) in tRNA + AMP + H(+). In terms of biological role, component of the EKC/KEOPS complex that is required for the formation of a threonylcarbamoyl group on adenosine at position 37 (t(6)A37) in tRNAs that read codons beginning with adenine. The complex is probably involved in the transfer of the threonylcarbamoyl moiety of threonylcarbamoyl-AMP (TC-AMP) to the N6 group of A37. Osgep likely plays a direct catalytic role in this reaction, but requires other protein(s) of the complex to fulfill this activity. This chain is Probable tRNA N6-adenosine threonylcarbamoyltransferase, found in Dictyostelium discoideum (Social amoeba).